Here is a 163-residue protein sequence, read N- to C-terminus: ATP synthase subunit delta, chloroplastic (163 aa).

This sequence belongs to the ATPase delta chain family. As to quaternary structure, F-type ATPases have 2 components, F(1) - the catalytic core - and F(0) - the membrane proton channel. F(1) has five subunits: alpha(3), beta(3), gamma(1), delta(1), epsilon(1). CF(0) has four main subunits: a(1), b(1), b'(1) and c(10-14). The alpha and beta chains form an alternating ring which encloses part of the gamma chain. F(1) is attached to F(0) by a central stalk formed by the gamma and epsilon chains, while a peripheral stalk is formed by the delta, b and b' chains.

It is found in the plastid. Its subcellular location is the chloroplast thylakoid membrane. Functionally, f(1)F(0) ATP synthase produces ATP from ADP in the presence of a proton or sodium gradient. F-type ATPases consist of two structural domains, F(1) containing the extramembraneous catalytic core and F(0) containing the membrane proton channel, linked together by a central stalk and a peripheral stalk. During catalysis, ATP synthesis in the catalytic domain of F(1) is coupled via a rotary mechanism of the central stalk subunits to proton translocation. This protein is part of the stalk that links CF(0) to CF(1). It either transmits conformational changes from CF(0) to CF(1) or is implicated in proton conduction. The polypeptide is ATP synthase subunit delta, chloroplastic (Cyanidioschyzon merolae (strain NIES-3377 / 10D) (Unicellular red alga)).